Consider the following 513-residue polypeptide: ATP synthase subunit alpha (513 aa).

Glycine 169–serine 176 is a binding site for ATP.

It belongs to the ATPase alpha/beta chains family. In terms of assembly, F-type ATPases have 2 components, CF(1) - the catalytic core - and CF(0) - the membrane proton channel. CF(1) has five subunits: alpha(3), beta(3), gamma(1), delta(1), epsilon(1). CF(0) has three main subunits: a(1), b(2) and c(9-12). The alpha and beta chains form an alternating ring which encloses part of the gamma chain. CF(1) is attached to CF(0) by a central stalk formed by the gamma and epsilon chains, while a peripheral stalk is formed by the delta and b chains.

It is found in the cell inner membrane. It catalyses the reaction ATP + H2O + 4 H(+)(in) = ADP + phosphate + 5 H(+)(out). Produces ATP from ADP in the presence of a proton gradient across the membrane. The alpha chain is a regulatory subunit. The protein is ATP synthase subunit alpha of Sodalis glossinidius (strain morsitans).